Here is a 423-residue protein sequence, read N- to C-terminus: Glutamate-1-semialdehyde 2,1-aminomutase (423 aa).

N6-(pyridoxal phosphate)lysine is present on Lys-259.

This sequence belongs to the class-III pyridoxal-phosphate-dependent aminotransferase family. HemL subfamily. Homodimer. Pyridoxal 5'-phosphate serves as cofactor.

Its subcellular location is the cytoplasm. The catalysed reaction is (S)-4-amino-5-oxopentanoate = 5-aminolevulinate. It participates in porphyrin-containing compound metabolism; protoporphyrin-IX biosynthesis; 5-aminolevulinate from L-glutamyl-tRNA(Glu): step 2/2. In Thermosipho africanus (strain TCF52B), this protein is Glutamate-1-semialdehyde 2,1-aminomutase.